The following is a 2340-amino-acid chain: Proto-oncogene tyrosine-protein kinase ROS (2340 aa).

The N-terminal stretch at 1–28 (MKNICWLTLKLVKFVVLGCIIWISVAQS) is a signal peptide. Over 29 to 1854 (TVLSSCLTSC…EDGVWITETS (1826 aa)) the chain is Extracellular. N-linked (GlcNAc...) asparagine glycosylation is present at Asn-53. 2 consecutive Fibronectin type-III domains span residues 111 to 206 (LPTA…VPET) and 207 to 295 (APLI…PSPS). N-linked (GlcNAc...) asparagine glycosylation is found at Asn-334 and Asn-362. The 101-residue stretch at 567-667 (LPGHPQEVSV…APSVGTTLVP (101 aa)) folds into the Fibronectin type-III 3 domain. N-linked (GlcNAc...) asparagine glycans are attached at residues Asn-935 and Asn-1011. 2 consecutive Fibronectin type-III domains span residues 943–1038 (IPDP…SVPS) and 1039–1146 (APEN…TSEI). Residue Asn-1243 is glycosylated (N-linked (GlcNAc...) asparagine). Fibronectin type-III domains follow at residues 1442-1549 (ASDM…TKSG), 1550-1649 (VPGA…VNMF), 1651-1744 (TPEK…TKAG), and 1745-1846 (VPSK…LVED). Residue Asn-1676 is glycosylated (N-linked (GlcNAc...) asparagine). A helical transmembrane segment spans residues 1855-1875 (FILTIIVGIFLVATVPLTFVW). Topologically, residues 1876–2340 (HRSLKSHKAS…AHSEHGDVSE (465 aa)) are cytoplasmic. The Protein kinase domain maps to 1938–2216 (LSLRLLLGSG…QLQLFRNVFL (279 aa)). Residues 1944–1952 (LGSGAFGEV) and Lys-1973 each bind ATP. The active-site Proton acceptor is Asp-2072. Residues Tyr-2267 and Tyr-2327 each carry the phosphotyrosine; by autocatalysis modification.

The protein belongs to the protein kinase superfamily. Tyr protein kinase family. Insulin receptor subfamily. In terms of assembly, interacts with PTPN11; may activate the PI3 kinase-mTOR signaling pathway. Interacts with VAV3; constitutive interaction mediating VAV3 phosphorylation. Interacts with PTPN6 (via SH2 1 domain); the interaction is direct and promotes ROS1 dephosphorylation. Post-translationally, phosphorylated. Probably autophosphorylates. Phosphorylation at Tyr-2267 and/or Tyr-2327 recruits PTPN11. Phosphorylation at Tyr-2267 is required for the interaction with PTPN6 that mediates ROS1 dephosphorylation. Phosphorylation at Tyr-2267 stimulates the kinase activity and the activation of the ERK1 signaling cascade. Expressed by epithelial cells of the caput epididymis (at protein level).

The protein localises to the cell membrane. It carries out the reaction L-tyrosyl-[protein] + ATP = O-phospho-L-tyrosyl-[protein] + ADP + H(+). Its activity is regulated as follows. Inhibited by dephosphorylation by PTPN6. In terms of biological role, receptor tyrosine kinase (RTK) that plays a role in epithelial cell differentiation and regionalization of the proximal epididymal epithelium. NELL2 is an endogenous ligand for ROS1. Upon endogenous stimulation by NELL2, ROS1 activates the intracellular signaling pathway and triggers epididymal epithelial differentiation and subsequent sperm maturation. May activate several downstream signaling pathways related to cell differentiation, proliferation, growth and survival including the PI3 kinase-mTOR signaling pathway. Mediates the phosphorylation of PTPN11, an activator of this pathway. May also phosphorylate and activate the transcription factor STAT3 to control anchorage-independent cell growth. Mediates the phosphorylation and the activation of VAV3, a guanine nucleotide exchange factor regulating cell morphology. May activate other downstream signaling proteins including AKT1, MAPK1, MAPK3, IRS1, and PLCG2. The chain is Proto-oncogene tyrosine-protein kinase ROS (Ros1) from Mus musculus (Mouse).